Consider the following 296-residue polypeptide: Bifunctional protein FolD (296 aa).

NADP(+)-binding positions include 168-170, T197, and V238; that span reads GRS.

The protein belongs to the tetrahydrofolate dehydrogenase/cyclohydrolase family. In terms of assembly, homodimer.

The catalysed reaction is (6R)-5,10-methylene-5,6,7,8-tetrahydrofolate + NADP(+) = (6R)-5,10-methenyltetrahydrofolate + NADPH. It carries out the reaction (6R)-5,10-methenyltetrahydrofolate + H2O = (6R)-10-formyltetrahydrofolate + H(+). It functions in the pathway one-carbon metabolism; tetrahydrofolate interconversion. In terms of biological role, catalyzes the oxidation of 5,10-methylenetetrahydrofolate to 5,10-methenyltetrahydrofolate and then the hydrolysis of 5,10-methenyltetrahydrofolate to 10-formyltetrahydrofolate. This Desulfotalea psychrophila (strain LSv54 / DSM 12343) protein is Bifunctional protein FolD.